Consider the following 195-residue polypeptide: Thymidine kinase (195 aa).

ATP-binding positions include 9–16 and 89–92; these read ATMNAGKS and DEAQ. The Proton acceptor role is filled by Glu90. Zn(2+) contacts are provided by Cys147, Cys149, Cys184, and His187.

It belongs to the thymidine kinase family. In terms of assembly, homotetramer.

The protein localises to the cytoplasm. The catalysed reaction is thymidine + ATP = dTMP + ADP + H(+). This Rhizobium meliloti (strain 1021) (Ensifer meliloti) protein is Thymidine kinase.